The primary structure comprises 349 residues: Probable G-protein coupled receptor 21 (349 aa).

Residues 1–32 lie on the Extracellular side of the membrane; the sequence is MNSTWDGNQSSHPFCLLALGYLETVRFCLLEV. Residues Asn2 and Asn8 are each glycosylated (N-linked (GlcNAc...) asparagine). Residues 33-53 form a helical membrane-spanning segment; sequence LIIVFLTVLIISGNIIVIFVF. Over 54 to 75 the chain is Cytoplasmic; sequence HCAPLLNHHSTSYFIQTMAYAD. Residues 76 to 96 form a helical membrane-spanning segment; that stretch reads LLVGVSCLVPSLSLLYYPLPI. The Extracellular portion of the chain corresponds to 97–104; it reads EEAMTCQV. Residues 105–125 traverse the membrane as a helical segment; it reads FGFVVSVLKSISMASLACISI. The Cytoplasmic portion of the chain corresponds to 126 to 147; the sequence is DRYIAITKPLTYNTLVTPWRLR. A helical transmembrane segment spans residues 148–168; the sequence is LCIFLIWLYSTLVFLPSFFHW. Topologically, residues 169–191 are extracellular; it reads GKPGYHGDVFQWCAESWHTNSYF. Residues 192–212 form a helical membrane-spanning segment; that stretch reads TLFIVMMLYAPAALIVCFTYF. Residues 213–252 lie on the Cytoplasmic side of the membrane; it reads NIFRICQQHTKEISERQARFSSQNGETGEPQTCPDKRYAM. A helical membrane pass occupies residues 253–273; the sequence is VLFRITSVFYVLWLPYIIYFL. The Extracellular portion of the chain corresponds to 274–283; that stretch reads LESSTGCSSR. Residues 284-304 traverse the membrane as a helical segment; that stretch reads LASFLTTWLAISNSFCNCIIY. Topologically, residues 305–349 are cytoplasmic; that stretch reads SLSNSVFQRGLKGLSGSLCTSCASHTTAKDPYTVRCKGPPNGSHI.

Belongs to the G-protein coupled receptor 1 family.

It localises to the cell membrane. Functionally, orphan receptor. The polypeptide is Probable G-protein coupled receptor 21 (Gpr21) (Mus musculus (Mouse)).